Here is a 620-residue protein sequence, read N- to C-terminus: Membrane protein insertase YidC (620 aa).

The next 6 membrane-spanning stretches (helical) occupy residues 5-25 (QIIG…FMST), 343-363 (LGWP…FDGL), 366-386 (VFSS…LVLL), 436-456 (LSGC…FNFF), 482-502 (LPFT…LMTI), and 529-549 (PVVF…YYFV).

It belongs to the OXA1/ALB3/YidC family. Type 1 subfamily. In terms of assembly, interacts with the Sec translocase complex via SecD. Specifically interacts with transmembrane segments of nascent integral membrane proteins during membrane integration.

It is found in the cell inner membrane. Required for the insertion and/or proper folding and/or complex formation of integral membrane proteins into the membrane. Involved in integration of membrane proteins that insert both dependently and independently of the Sec translocase complex, as well as at least some lipoproteins. Aids folding of multispanning membrane proteins. This Cytophaga hutchinsonii (strain ATCC 33406 / DSM 1761 / CIP 103989 / NBRC 15051 / NCIMB 9469 / D465) protein is Membrane protein insertase YidC.